Reading from the N-terminus, the 264-residue chain is MSKITTASLLKMKQDDQKITAITAYDASFAKLFDDEGAHVLLIGDSLGMVLQGGQDTLAVSVDEMVYHTRCVARGASNALIIADMPFMSYATPEQTYQTAARLMAAGARMVKMEGGDWLCDSIRHLTRNGVPVCGHLGLTPQSVHVFGGFKVQGRDEYQAQEIYRQALCLQEAGIQLLVLECVPVALAERITKALRIPVIGIGAGPATDGQILVMHDAFGITSGYVPKFTKNFLAETGDMHAAIRLYVQQVSEGTFPGPEHSFN.

Mg(2+) is bound by residues aspartate 45 and aspartate 84. Residues 45-46, aspartate 84, and lysine 112 each bind 3-methyl-2-oxobutanoate; that span reads DS. Mg(2+) is bound at residue glutamate 114. Residue glutamate 181 is the Proton acceptor of the active site.

It belongs to the PanB family. In terms of assembly, homodecamer; pentamer of dimers. Requires Mg(2+) as cofactor.

Its subcellular location is the cytoplasm. The enzyme catalyses 3-methyl-2-oxobutanoate + (6R)-5,10-methylene-5,6,7,8-tetrahydrofolate + H2O = 2-dehydropantoate + (6S)-5,6,7,8-tetrahydrofolate. It participates in cofactor biosynthesis; (R)-pantothenate biosynthesis; (R)-pantoate from 3-methyl-2-oxobutanoate: step 1/2. Functionally, catalyzes the reversible reaction in which hydroxymethyl group from 5,10-methylenetetrahydrofolate is transferred onto alpha-ketoisovalerate to form ketopantoate. In Aeromonas salmonicida (strain A449), this protein is 3-methyl-2-oxobutanoate hydroxymethyltransferase.